Here is a 730-residue protein sequence, read N- to C-terminus: Rap1 GTPase-activating protein 2 (730 aa).

The 217-residue stretch at 247-463 (IVAYDEHEVN…RTRAALLDNL (217 aa)) folds into the Rap-GAP domain. 2 disordered regions span residues 510–668 (MVGS…STAS) and 698–730 (SRSP…STSH). 2 stretches are compositionally biased toward polar residues: residues 535–557 (GEVT…QSRS) and 597–612 (HSSQ…NPSS). Residues 617-630 (PNKDRPFVKLKENG) are compositionally biased toward basic and acidic residues. A compositionally biased stretch (low complexity) spans 631 to 651 (RSNISRSSSSTSSFSSTAGES). Over residues 699–712 (RSPTDIKNRNSPRS) the composition is skewed to polar residues.

The protein resides in the cytoplasm. GTPase activator for the nuclear Ras-related regulatory protein RAP-1A (KREV-1), converting it to the putatively inactive GDP-bound state. This is Rap1 GTPase-activating protein 2 (RAP1GAP2) from Gallus gallus (Chicken).